Here is a 232-residue protein sequence, read N- to C-terminus: MTETRGARATEAFFGRRKGKPLRERQAAHLEHLLPLLKLDLEEPAPADLTALFPEPVERIRLEIGFGGGEHLIHRAAEDPATGFIGVEPFVNSMAKLLGQIEAKAIRNIRLYDDDATQVLDWLPAASVDQIDLLYPDPWPKRKHWKRRFVSQINLDRFARILKPGGLFCFASDIDSYINWTLIHCREHAAFEWTAERAADWLTPFAGWPSTRYEAKARREGRSSAYLAFRRA.

E63, E88, D115, and D137 together coordinate S-adenosyl-L-methionine. D137 is a catalytic residue. Substrate is bound by residues K141, D173, and 211-214; that span reads TRYE.

This sequence belongs to the class I-like SAM-binding methyltransferase superfamily. TrmB family.

It carries out the reaction guanosine(46) in tRNA + S-adenosyl-L-methionine = N(7)-methylguanosine(46) in tRNA + S-adenosyl-L-homocysteine. It participates in tRNA modification; N(7)-methylguanine-tRNA biosynthesis. In terms of biological role, catalyzes the formation of N(7)-methylguanine at position 46 (m7G46) in tRNA. The polypeptide is tRNA (guanine-N(7)-)-methyltransferase (Rhizobium meliloti (strain 1021) (Ensifer meliloti)).